Reading from the N-terminus, the 458-residue chain is ATP synthase subunit beta (458 aa).

148–155 (GGAGVGKT) contacts ATP.

Belongs to the ATPase alpha/beta chains family. In terms of assembly, F-type ATPases have 2 components, CF(1) - the catalytic core - and CF(0) - the membrane proton channel. CF(1) has five subunits: alpha(3), beta(3), gamma(1), delta(1), epsilon(1). CF(0) has three main subunits: a(1), b(2) and c(9-12). The alpha and beta chains form an alternating ring which encloses part of the gamma chain. CF(1) is attached to CF(0) by a central stalk formed by the gamma and epsilon chains, while a peripheral stalk is formed by the delta and b chains.

The protein localises to the cell inner membrane. The enzyme catalyses ATP + H2O + 4 H(+)(in) = ADP + phosphate + 5 H(+)(out). Its function is as follows. Produces ATP from ADP in the presence of a proton gradient across the membrane. The catalytic sites are hosted primarily by the beta subunits. The chain is ATP synthase subunit beta from Pseudomonas putida (strain W619).